Consider the following 79-residue polypeptide: Acyl carrier protein (79 aa).

A Carrier domain is found at 2–77 (SDIAERVKKI…DAVKFLEKNS (76 aa)). Position 37 is an O-(pantetheine 4'-phosphoryl)serine (serine 37).

The protein belongs to the acyl carrier protein (ACP) family. Post-translationally, 4'-phosphopantetheine is transferred from CoA to a specific serine of apo-ACP by AcpS. This modification is essential for activity because fatty acids are bound in thioester linkage to the sulfhydryl of the prosthetic group.

The protein resides in the cytoplasm. Its pathway is lipid metabolism; fatty acid biosynthesis. Its function is as follows. Carrier of the growing fatty acid chain in fatty acid biosynthesis. The sequence is that of Acyl carrier protein from Methylobacterium radiotolerans (strain ATCC 27329 / DSM 1819 / JCM 2831 / NBRC 15690 / NCIMB 10815 / 0-1).